The sequence spans 521 residues: Envelope glycoprotein (521 aa).

Positions M1–Q20 are cleaved as a signal peptide. N-linked (GlcNAc...) asparagine; by host glycans are attached at residues N44, N158, N189, and N396. The helical transmembrane segment at I501 to M517 threads the bilayer.

Homooligomer; disulfide-linked (possibly homodimer).

The protein resides in the virion membrane. Attaches the virus to host cellular receptor and later induces fusion of virion with host membrane. The chain is Envelope glycoprotein (P4) from Dhori virus (strain Indian/1313/61) (Dho).